Here is a 325-residue protein sequence, read N- to C-terminus: GMP reductase (325 aa).

Cys-174 serves as the catalytic Thioimidate intermediate. 203 to 226 (LIADGGIRTHGDIAKSIRFGASMV) provides a ligand contact to NADP(+).

It belongs to the IMPDH/GMPR family. GuaC type 2 subfamily.

It catalyses the reaction IMP + NH4(+) + NADP(+) = GMP + NADPH + 2 H(+). In terms of biological role, catalyzes the irreversible NADPH-dependent deamination of GMP to IMP. It functions in the conversion of nucleobase, nucleoside and nucleotide derivatives of G to A nucleotides, and in maintaining the intracellular balance of A and G nucleotides. The chain is GMP reductase from Staphylococcus aureus (strain JH9).